The sequence spans 779 residues: Glucan endo-1,3-beta-D-glucosidase 2 (779 aa).

Positions 1–71 (MCYSRQAIPP…SNPLADSQVN (71 aa)) are disordered. The span at 57–71 (RTPSSSNPLADSQVN) shows a compositional bias: polar residues. The segment at 73 to 309 (DNIFQSPVLS…NGLICQLSAD (237 aa)) is beta-sandwich subdomain. The 707-residue stretch at 73-779 (DNIFQSPVLS…WSLAYSGAFS (707 aa)) folds into the GH81 domain. Positions 309-400 (DSVPSIDMAA…LTNSFDMQVQ (92 aa)) are alpha/beta subdomain. Positions 375 to 779 (IASSLDSTVK…WSLAYSGAFS (405 aa)) are sufficient for catalytic activity. The tract at residues 415–779 (NKKADYSQEK…WSLAYSGAFS (365 aa)) is (alpha/beta)6 barrel subdomain. Residue Asp526 is part of the active site. The (1,3-beta-D-glucosyl)n site is built by His530, Asp607, Glu609, and Glu613. Residues Glu609 and Glu613 contribute to the active site. The tract at residues 678-680 (KID) is may provide specificity for triple-helical beta-glucan. Tyr691 serves as a coordination point for (1,3-beta-D-glucosyl)n.

It belongs to the glycosyl hydrolase 81 family.

It is found in the cytoplasm. The catalysed reaction is Hydrolysis of (1-&gt;3)-beta-D-glucosidic linkages in (1-&gt;3)-beta-D-glucans.. Inhibited by mercury ions. Cleaves internal linkages in 1,3-beta-glucan. The protein is Glucan endo-1,3-beta-D-glucosidase 2 of Saccharomyces cerevisiae (strain ATCC 204508 / S288c) (Baker's yeast).